The primary structure comprises 259 residues: Enolase-phosphatase E1 (259 aa).

The Mg(2+) site is built by Asp16 and Glu18. Substrate is bound by residues 151-152 (SS) and Lys185. Residue Asp210 participates in Mg(2+) binding.

The protein belongs to the HAD-like hydrolase superfamily. MasA/MtnC family. As to quaternary structure, monomer. Mg(2+) is required as a cofactor.

The protein resides in the cytoplasm. It is found in the nucleus. The enzyme catalyses 5-methylsulfanyl-2,3-dioxopentyl phosphate + H2O = 1,2-dihydroxy-5-(methylsulfanyl)pent-1-en-3-one + phosphate. Its pathway is amino-acid biosynthesis; L-methionine biosynthesis via salvage pathway; L-methionine from S-methyl-5-thio-alpha-D-ribose 1-phosphate: step 3/6. It participates in amino-acid biosynthesis; L-methionine biosynthesis via salvage pathway; L-methionine from S-methyl-5-thio-alpha-D-ribose 1-phosphate: step 4/6. Its function is as follows. Bifunctional enzyme that catalyzes the enolization of 2,3-diketo-5-methylthiopentyl-1-phosphate (DK-MTP-1-P) into the intermediate 2-hydroxy-3-keto-5-methylthiopentenyl-1-phosphate (HK-MTPenyl-1-P), which is then dephosphorylated to form the acireductone 1,2-dihydroxy-3-keto-5-methylthiopentene (DHK-MTPene). The protein is Enolase-phosphatase E1 (enoph1) of Xenopus tropicalis (Western clawed frog).